A 216-amino-acid polypeptide reads, in one-letter code: Phosphatidylserine decarboxylase proenzyme (216 aa).

The active-site Schiff-base intermediate with substrate; via pyruvic acid is S185. The residue at position 185 (S185) is a Pyruvic acid (Ser); by autocatalysis.

This sequence belongs to the phosphatidylserine decarboxylase family. PSD-A subfamily. In terms of assembly, heterodimer of a large membrane-associated beta subunit and a small pyruvoyl-containing alpha subunit. Requires pyruvate as cofactor. In terms of processing, is synthesized initially as an inactive proenzyme. Formation of the active enzyme involves a self-maturation process in which the active site pyruvoyl group is generated from an internal serine residue via an autocatalytic post-translational modification. Two non-identical subunits are generated from the proenzyme in this reaction, and the pyruvate is formed at the N-terminus of the alpha chain, which is derived from the carboxyl end of the proenzyme. The post-translation cleavage follows an unusual pathway, termed non-hydrolytic serinolysis, in which the side chain hydroxyl group of the serine supplies its oxygen atom to form the C-terminus of the beta chain, while the remainder of the serine residue undergoes an oxidative deamination to produce ammonia and the pyruvoyl prosthetic group on the alpha chain.

Its subcellular location is the cell membrane. It catalyses the reaction a 1,2-diacyl-sn-glycero-3-phospho-L-serine + H(+) = a 1,2-diacyl-sn-glycero-3-phosphoethanolamine + CO2. It participates in phospholipid metabolism; phosphatidylethanolamine biosynthesis; phosphatidylethanolamine from CDP-diacylglycerol: step 2/2. Its function is as follows. Catalyzes the formation of phosphatidylethanolamine (PtdEtn) from phosphatidylserine (PtdSer). This chain is Phosphatidylserine decarboxylase proenzyme, found in Nitrosomonas europaea (strain ATCC 19718 / CIP 103999 / KCTC 2705 / NBRC 14298).